The chain runs to 1404 residues: MKDLLKFLKQQSKTEEFEGIKIGLASPDLIRSWSFGEVKKPETINYRTFKPEREGLFCARIFGPVKDYECLCGKYKRLKHRGVICEKCGVEVTQTKVRRERMGHIDLASPVAHIWFLKSLPSRIGLMLDMTLRDIERVLYFESFVVIEPGMTSLERGQMLTEENYLDALEEYGDEFDAKMGAEAVLELLRAIELEKEIEMMREELPSINSETRRKKVTKRLKLIEAFFTSGNKPEWMILKVLPVLPPDLRPLVPLDGGRFATSDLNDLYRRVINRNNRLKRLLDLAAPDIIVRNEKRMLQESVDALLDNGRRGRAITGSNKRPLKSLADMIKGKQGRFRQNLLGKRVDYSGRSVITVGPTLRLHQCGLPKKMALELFKPFIYGKLEGRGLATTIKAAKKMVEREVPEVWDVLDDVIREHPVMLNRAPTLHRLGIQAFEPVLIEGKAIQLHPLVCAAYNADFDGDQMAVHVPLTLEAQLEARSLMMSTNNILSPANGEPVITPSQDVVLGLYYTSRERINGKGEGMAFSDVAEAEKAYRTGVAELHARVKVRITETATNEAGEKVKTRRIVDTTVGRALLSQILPKGLSYDLVNQNMGKKQISKLLNTCYRQLGLKDTVIFADQLMYTGFHFATISGASVGIDDMVIPDEKYTLVADAEAEVLEIQEQFQSGLVTAGERYNKVIDIWASANEKVSKAMMANLSKETVVNRDGVEEQQESFNSIYMMADSGARGSAAQIRQLAGMRGLMAKPDGSIIETPIVANFREGLNVSQYFISTHGARKGLADTALKTANSGYLTRRLVDVAQDLVVIEDDCGTFEGLTMKPLIEGGDVVEPLRERVLGRVVAQDVFKPGTEEVLVPRNTLLDEAWCDIVEDNSIDEMIVRSVISCDTDFGVCKACYGRDLARGHIINQGEAIGVVAAQSIGEPGTQLTMRTFHIGGAASRASAENNVQVKNSGTLKLHNAKYVTNSNGKLVIVSRSSELAIIDELGREKERYKVPYGTVLEKLEDDGVSAGEIIAKWDPHTHPIISEVAGSIKFVDMIEGVTMTRQTDELTGLSSIVVLEVGQRPTAGKEMRPMIRLVAADGGDLMIPGTEVPAQYFLPGHAIVNLDDNAPINVGDALARIPQESSKTRDITGGLPRVADLFEARKPKEPAILAEVSGTISFGKETKGKRRLVITPADGGEHYEEMIPKWRNLNVFEGEKVERGEVIADGPEAAHDILRLRGIHNVANYIVNEVQDVYRLQGVKINDKHIEVIIRQMLRKCEIVDAGDSEFLPGEQAEVSRVKIANRELEAQGKQPATFERELLGITKASLATESFISAASFQETTRVLTEAAVGGKSDKLRGLKENVIVGRLIPAGTGYSYHQKRAEAAAKPAATEAPAISASEAEQNLADLLNLAGSND.

Residues Cys70, Cys72, Cys85, and Cys88 each contribute to the Zn(2+) site. Residues Asp460, Asp462, and Asp464 each coordinate Mg(2+). The Zn(2+) site is built by Cys814, Cys888, Cys895, and Cys898.

This sequence belongs to the RNA polymerase beta' chain family. As to quaternary structure, the RNAP catalytic core consists of 2 alpha, 1 beta, 1 beta' and 1 omega subunit. When a sigma factor is associated with the core the holoenzyme is formed, which can initiate transcription. Mg(2+) is required as a cofactor. Requires Zn(2+) as cofactor.

The enzyme catalyses RNA(n) + a ribonucleoside 5'-triphosphate = RNA(n+1) + diphosphate. Functionally, DNA-dependent RNA polymerase catalyzes the transcription of DNA into RNA using the four ribonucleoside triphosphates as substrates. This chain is DNA-directed RNA polymerase subunit beta', found in Shewanella pealeana (strain ATCC 700345 / ANG-SQ1).